Consider the following 425-residue polypeptide: UDP-N-acetylglucosamine 1-carboxyvinyltransferase (425 aa).

Residue 23–24 (KN) participates in phosphoenolpyruvate binding. Arginine 100 contributes to the UDP-N-acetyl-alpha-D-glucosamine binding site. The Proton donor role is filled by cysteine 124. Cysteine 124 carries the 2-(S-cysteinyl)pyruvic acid O-phosphothioketal modification. UDP-N-acetyl-alpha-D-glucosamine is bound by residues aspartate 313 and isoleucine 335.

It belongs to the EPSP synthase family. MurA subfamily.

Its subcellular location is the cytoplasm. It carries out the reaction phosphoenolpyruvate + UDP-N-acetyl-alpha-D-glucosamine = UDP-N-acetyl-3-O-(1-carboxyvinyl)-alpha-D-glucosamine + phosphate. The protein operates within cell wall biogenesis; peptidoglycan biosynthesis. Functionally, cell wall formation. Adds enolpyruvyl to UDP-N-acetylglucosamine. In Wolbachia sp. subsp. Brugia malayi (strain TRS), this protein is UDP-N-acetylglucosamine 1-carboxyvinyltransferase.